Here is a 90-residue protein sequence, read N- to C-terminus: Probable Fe(2+)-trafficking protein (90 aa).

Belongs to the Fe(2+)-trafficking protein family.

Could be a mediator in iron transactions between iron acquisition and iron-requiring processes, such as synthesis and/or repair of Fe-S clusters in biosynthetic enzymes. The polypeptide is Probable Fe(2+)-trafficking protein (Acinetobacter baylyi (strain ATCC 33305 / BD413 / ADP1)).